Consider the following 350-residue polypeptide: NAD-dependent protein deacetylase sirtuin-2 (350 aa).

A Nuclear export signal motif is present at residues leucine 4–leucine 14. Phosphoserine is present on serine 16. Positions arginine 20–lysine 301 constitute a Deacetylase sirtuin-type domain. NAD(+) is bound by residues alanine 48–threonine 52 and aspartate 58–arginine 60. At serine 63 the chain carries Phosphoserine. Glutamine 130–aspartate 133 is a binding site for NAD(+). The Proton acceptor role is filled by histidine 150. Zn(2+) is bound by residues cysteine 158 and cysteine 163. Serine 170 is modified (phosphoserine). Zn(2+)-binding residues include cysteine 184 and cysteine 187. Residues threonine 225–serine 226, asparagine 249–glutamate 251, and cysteine 287 each bind NAD(+). Positions alanine 312–histidine 350 are disordered. Over residues aspartate 315 to proline 331 the composition is skewed to polar residues. Serine 330 and serine 334 each carry phosphoserine. Residues glutamate 340 to histidine 350 show a composition bias toward basic and acidic residues.

This sequence belongs to the sirtuin family. Class I subfamily. As to quaternary structure, interacts with CDC20, FOXO3 and FZR1. Associates with microtubules in primary cortical mature neurons. Homotrimer. Interacts (via both phosphorylated, unphosphorylated, active or inactive forms) with HDAC6; the interaction is necessary for the complex to interact with alpha-tubulin, suggesting that these proteins belong to a large complex that deacetylates the cytoskeleton. Interacts with FOXO1; the interaction is disrupted upon serum-starvation or oxidative stress, leading to increased level of acetylated FOXO1 and induction of autophagy. Interacts with RELA; the interaction occurs in the cytoplasm and is increased in a TNF-alpha-dependent manner. Interacts with HOXA10; the interaction is direct. Interacts with YWHAB and YWHAG; the interactions occur in a AKT-dependent manner and increase SIRT2-dependent TP53 deacetylation. Interacts with MAPK1/ERK2 and MAPK3/ERK1; the interactions increase SIRT2 stability and deacetylation activity. Interacts (phosphorylated form) with KMT5A isoform 2; the interaction is direct, stimulates KMT5A-mediated methyltransferase activity on histone at 'Lys-20' (H4K20me1) and is increased in a H(2)O(2)-induced oxidative stress-dependent manner. Interacts with G6PD; the interaction is enhanced by H(2)O(2) treatment. Interacts with a G1/S-specific cyclin E-CDK2 complex. Interacts with AURKA, CDK5R1 (p35 form) and CDK5 and HIF1A. Interacts with the tRNA ligase SARS1; recruited to the VEGFA promoter via interaction with SARS1. Interacts with BEX4; negatively regulates alpha-tubulin deacetylation by SIRT2. Zn(2+) is required as a cofactor. Post-translationally, phosphorylated at phosphoserine and phosphothreonine. Phosphorylated at Ser-330 by a mitotic kinase CDK1/cyclin B at the G2/M transition; phosphorylation regulates the delay in cell-cycle progression. Phosphorylated at Ser-330 by a mitotic kinase G1/S-specific cyclin E/Cdk2 complex; phosphorylation inactivates SIRT2-mediated alpha-tubulin deacetylation and thereby negatively regulates cell adhesion, cell migration and neurite outgrowth during neuronal differentiation. Phosphorylated by cyclin A/Cdk2 and p35-Cdk5 complexes and to a lesser extent by the cyclin D3/Cdk4 and cyclin B/Cdk1, in vitro. Dephosphorylated at Ser-330 by CDC14A and CDC14B around early anaphase. Acetylated by EP300; acetylation leads both to the decreased of SIRT2-mediated alpha-tubulin deacetylase activity and SIRT2-mediated down-regulation of TP53 transcriptional activity. In terms of processing, ubiquitinated. Expressed in the cerebellum, cerebral cortex and cervival spinal cord. Expressed in Purkinje cells, oligodendrocytes and Schwann cells (at protein level). Expressed in the central nervous system (CNS).

The protein resides in the nucleus. Its subcellular location is the cytoplasm. It localises to the perinuclear region. The protein localises to the cytoskeleton. It is found in the microtubule organizing center. The protein resides in the centrosome. Its subcellular location is the centriole. It localises to the spindle. The protein localises to the midbody. It is found in the chromosome. The protein resides in the perikaryon. Its subcellular location is the cell projection. It localises to the growth cone. The protein localises to the myelin membrane. It carries out the reaction N(6)-acetyl-L-lysyl-[protein] + NAD(+) + H2O = 2''-O-acetyl-ADP-D-ribose + nicotinamide + L-lysyl-[protein]. The catalysed reaction is N(6)-tetradecanoyl-L-lysyl-[protein] + NAD(+) + H2O = 2''-O-tetradecanoyl-ADP-D-ribose + nicotinamide + L-lysyl-[protein]. The enzyme catalyses N(6)-hexadecanoyl-L-lysyl-[protein] + NAD(+) + H2O = 2''-O-hexadecanoyl-ADP-D-ribose + nicotinamide + L-lysyl-[protein]. Its activity is regulated as follows. Inhibited by Sirtinol, A3 and M15 small molecules. Inhibited by nicotinamide. Inhibited by a macrocyclic peptide inhibitor S2iL5. Inhibited by EP300-induced acetylation. NAD-dependent protein deacetylase, which deacetylates internal lysines on histone and alpha-tubulin as well as many other proteins such as key transcription factors. Participates in the modulation of multiple and diverse biological processes such as cell cycle control, genomic integrity, microtubule dynamics, cell differentiation, metabolic networks, and autophagy. Plays a major role in the control of cell cycle progression and genomic stability. Functions in the antephase checkpoint preventing precocious mitotic entry in response to microtubule stress agents, and hence allowing proper inheritance of chromosomes. Positively regulates the anaphase promoting complex/cyclosome (APC/C) ubiquitin ligase complex activity by deacetylating CDC20 and FZR1, then allowing progression through mitosis. Associates both with chromatin at transcriptional start sites (TSSs) and enhancers of active genes. Plays a role in cell cycle and chromatin compaction through epigenetic modulation of the regulation of histone H4 'Lys-20' methylation (H4K20me1) during early mitosis. Specifically deacetylates histone H4 at 'Lys-16' (H4K16ac) between the G2/M transition and metaphase enabling H4K20me1 deposition by KMT5A leading to ulterior levels of H4K20me2 and H4K20me3 deposition throughout cell cycle, and mitotic S-phase progression. Deacetylates KMT5A modulating KMT5A chromatin localization during the mitotic stress response. Also deacetylates histone H3 at 'Lys-57' (H3K56ac) during the mitotic G2/M transition. During oocyte meiosis progression, may deacetylate histone H4 at 'Lys-16' (H4K16ac) and alpha-tubulin, regulating spindle assembly and chromosome alignment by influencing microtubule dynamics and kinetochore function. Deacetylates histone H4 at 'Lys-16' (H4K16ac) at the VEGFA promoter and thereby contributes to regulate expression of VEGFA, a key regulator of angiogenesis. Deacetylates alpha-tubulin at 'Lys-40' and hence controls neuronal motility, oligodendroglial cell arbor projection processes and proliferation of non-neuronal cells. Phosphorylation at Ser-368 by a G1/S-specific cyclin E-CDK2 complex inactivates SIRT2-mediated alpha-tubulin deacetylation, negatively regulating cell adhesion, cell migration and neurite outgrowth during neuronal differentiation. Deacetylates PARD3 and participates in the regulation of Schwann cell peripheral myelination formation during early postnatal development and during postinjury remyelination. Involved in several cellular metabolic pathways. Plays a role in the regulation of blood glucose homeostasis by deacetylating and stabilizing phosphoenolpyruvate carboxykinase PCK1 activity in response to low nutrient availability. Acts as a key regulator in the pentose phosphate pathway (PPP) by deacetylating and activating the glucose-6-phosphate G6PD enzyme, and therefore, stimulates the production of cytosolic NADPH to counteract oxidative damage. Maintains energy homeostasis in response to nutrient deprivation as well as energy expenditure by inhibiting adipogenesis and promoting lipolysis. Attenuates adipocyte differentiation by deacetylating and promoting FOXO1 interaction to PPARG and subsequent repression of PPARG-dependent transcriptional activity. Plays a role in the regulation of lysosome-mediated degradation of protein aggregates by autophagy in neuronal cells. Deacetylates FOXO1 in response to oxidative stress or serum deprivation, thereby negatively regulating FOXO1-mediated autophagy. Deacetylates a broad range of transcription factors and co-regulators regulating target gene expression. Deacetylates transcriptional factor FOXO3 stimulating the ubiquitin ligase SCF(SKP2)-mediated FOXO3 ubiquitination and degradation. Deacetylates HIF1A and therefore promotes HIF1A degradation and inhibition of HIF1A transcriptional activity in tumor cells in response to hypoxia. Deacetylates RELA in the cytoplasm inhibiting NF-kappaB-dependent transcription activation upon TNF-alpha stimulation. Inhibits transcriptional activation by deacetylating p53/TP53 and EP300. Also deacetylates EIF5A. Functions as a negative regulator on oxidative stress-tolerance in response to anoxia-reoxygenation conditions. Plays a role as tumor suppressor. In addition to protein deacetylase activity, also has activity toward long-chain fatty acyl groups and mediates protein-lysine demyristoylation and depalmitoylation of target proteins, such as ARF6 and KRAS, thereby regulating their association with membranes. The protein is NAD-dependent protein deacetylase sirtuin-2 (Sirt2) of Rattus norvegicus (Rat).